A 364-amino-acid polypeptide reads, in one-letter code: DNA polymerase IV (364 aa).

Residues 14 to 198 form the UmuC domain; that stretch reads IIHIDMDAFF…LPIEKFHGVG (185 aa). Mg(2+)-binding residues include D18 and D116. The active site involves E117.

Belongs to the DNA polymerase type-Y family. In terms of assembly, monomer. Requires Mg(2+) as cofactor.

The protein resides in the cytoplasm. The enzyme catalyses DNA(n) + a 2'-deoxyribonucleoside 5'-triphosphate = DNA(n+1) + diphosphate. Poorly processive, error-prone DNA polymerase involved in untargeted mutagenesis. Copies undamaged DNA at stalled replication forks, which arise in vivo from mismatched or misaligned primer ends. These misaligned primers can be extended by PolIV. Exhibits no 3'-5' exonuclease (proofreading) activity. May be involved in translesional synthesis, in conjunction with the beta clamp from PolIII. In Streptococcus pyogenes serotype M4 (strain MGAS10750), this protein is DNA polymerase IV.